Consider the following 328-residue polypeptide: DNA-directed RNA polymerase subunit alpha (328 aa).

The tract at residues 1-231 (MIYQMQMPAK…EHVTFFADFS (231 aa)) is alpha N-terminal domain (alpha-NTD). The tract at residues 252–328 (MRKLFNTKIE…MDITKYQMKG (77 aa)) is alpha C-terminal domain (alpha-CTD).

It belongs to the RNA polymerase alpha chain family. Homodimer. The RNAP catalytic core consists of 2 alpha, 1 beta, 1 beta' and 1 omega subunit. When a sigma factor is associated with the core the holoenzyme is formed, which can initiate transcription.

It carries out the reaction RNA(n) + a ribonucleoside 5'-triphosphate = RNA(n+1) + diphosphate. DNA-dependent RNA polymerase catalyzes the transcription of DNA into RNA using the four ribonucleoside triphosphates as substrates. The protein is DNA-directed RNA polymerase subunit alpha of Chlorobium limicola (strain DSM 245 / NBRC 103803 / 6330).